The following is a 94-amino-acid chain: MAGTAAHPEGITNPPIDELLEATDSKYSLVIYAAKRARQINAYYSQLGEGLLEYVGPLVETTNAQEKPLSIALREINAGLLTHETVADSLPPVS.

Belongs to the RNA polymerase subunit omega family. The RNAP catalytic core consists of 2 alpha, 1 beta, 1 beta' and 1 omega subunit. When a sigma factor is associated with the core the holoenzyme is formed, which can initiate transcription.

It catalyses the reaction RNA(n) + a ribonucleoside 5'-triphosphate = RNA(n+1) + diphosphate. Promotes RNA polymerase assembly. Latches the N- and C-terminal regions of the beta' subunit thereby facilitating its interaction with the beta and alpha subunits. This is DNA-directed RNA polymerase subunit omega from Frankia casuarinae (strain DSM 45818 / CECT 9043 / HFP020203 / CcI3).